The sequence spans 46 residues: Amine oxidase [flavin-containing] A (46 aa).

Belongs to the flavin monoamine oxidase family. In terms of assembly, monomer, homo- or heterodimer (containing two subunits of similar size). Each subunit contains a covalently bound flavin. Enzymatically active as monomer. The cofactor is FAD.

It is found in the mitochondrion outer membrane. The catalysed reaction is a secondary aliphatic amine + O2 + H2O = a primary amine + an aldehyde + H2O2. It carries out the reaction a primary methyl amine + O2 + H2O = an aldehyde + H2O2 + NH4(+). The enzyme catalyses (R)-adrenaline + O2 + H2O = (R)-3,4-dihydroxymandelaldehyde + methylamine + H2O2. It catalyses the reaction dopamine + O2 + H2O = 3,4-dihydroxyphenylacetaldehyde + H2O2 + NH4(+). The catalysed reaction is tyramine + O2 + H2O = (4-hydroxyphenyl)acetaldehyde + H2O2 + NH4(+). It carries out the reaction (R)-noradrenaline + O2 + H2O = (R)-3,4-dihydroxymandelaldehyde + H2O2 + NH4(+). The enzyme catalyses serotonin + O2 + H2O = (5-hydroxyindol-3-yl)acetaldehyde + H2O2 + NH4(+). It catalyses the reaction kynuramine + O2 + H2O = 3-(2-aminophenyl)-3-oxopropanal + H2O2 + NH4(+). The catalysed reaction is tryptamine + O2 + H2O = indole-3-acetaldehyde + H2O2 + NH4(+). It carries out the reaction 2-phenylethylamine + O2 + H2O = 2-phenylacetaldehyde + H2O2 + NH4(+). Catalyzes the oxidative deamination of primary and some secondary amine such as neurotransmitters, with concomitant reduction of oxygen to hydrogen peroxide and has important functions in the metabolism of neuroactive and vasoactive amines in the central nervous system and peripheral tissues. Preferentially oxidizes serotonin. Also catalyzes the oxidative deamination of kynuramine to 3-(2-aminophenyl)-3-oxopropanal that can spontaneously condense to 4-hydroxyquinoline. The chain is Amine oxidase [flavin-containing] A from Ovis aries (Sheep).